The primary structure comprises 126 residues: Aspartate 1-decarboxylase (126 aa).

The Schiff-base intermediate with substrate; via pyruvic acid role is filled by S25. Residue S25 is modified to Pyruvic acid (Ser). T57 serves as a coordination point for substrate. Y58 serves as the catalytic Proton donor. Substrate is bound at residue 73–75 (GAA).

This sequence belongs to the PanD family. Heterooctamer of four alpha and four beta subunits. Pyruvate is required as a cofactor. In terms of processing, is synthesized initially as an inactive proenzyme, which is activated by self-cleavage at a specific serine bond to produce a beta-subunit with a hydroxyl group at its C-terminus and an alpha-subunit with a pyruvoyl group at its N-terminus.

The protein resides in the cytoplasm. It catalyses the reaction L-aspartate + H(+) = beta-alanine + CO2. It functions in the pathway cofactor biosynthesis; (R)-pantothenate biosynthesis; beta-alanine from L-aspartate: step 1/1. In terms of biological role, catalyzes the pyruvoyl-dependent decarboxylation of aspartate to produce beta-alanine. In Marinomonas sp. (strain MWYL1), this protein is Aspartate 1-decarboxylase.